The chain runs to 467 residues: ATP synthase subunit beta (467 aa).

156 to 163 is a binding site for ATP; the sequence is GGAGVGKT.

It belongs to the ATPase alpha/beta chains family. In terms of assembly, F-type ATPases have 2 components, CF(1) - the catalytic core - and CF(0) - the membrane proton channel. CF(1) has five subunits: alpha(3), beta(3), gamma(1), delta(1), epsilon(1). CF(0) has three main subunits: a(1), b(2) and c(9-12). The alpha and beta chains form an alternating ring which encloses part of the gamma chain. CF(1) is attached to CF(0) by a central stalk formed by the gamma and epsilon chains, while a peripheral stalk is formed by the delta and b chains.

The protein resides in the cell inner membrane. It catalyses the reaction ATP + H2O + 4 H(+)(in) = ADP + phosphate + 5 H(+)(out). Produces ATP from ADP in the presence of a proton gradient across the membrane. The catalytic sites are hosted primarily by the beta subunits. In Cupriavidus metallidurans (strain ATCC 43123 / DSM 2839 / NBRC 102507 / CH34) (Ralstonia metallidurans), this protein is ATP synthase subunit beta.